Consider the following 21-residue polypeptide: 78 kDa dihydrolipoyllysine-residue acetyltransferase component of pyruvate dehydrogenase complex (21 aa).

It belongs to the 2-oxoacid dehydrogenase family. In terms of assembly, forms a 60-polypeptide structural core. Requires (R)-lipoate as cofactor.

Its subcellular location is the mitochondrion matrix. The enzyme catalyses N(6)-[(R)-dihydrolipoyl]-L-lysyl-[protein] + acetyl-CoA = N(6)-[(R)-S(8)-acetyldihydrolipoyl]-L-lysyl-[protein] + CoA. In terms of biological role, the pyruvate dehydrogenase complex catalyzes the overall conversion of pyruvate to acetyl-CoA and CO(2). It contains multiple copies of three enzymatic components: pyruvate dehydrogenase (E1), dihydrolipoamide acetyltransferase (E2) and lipoamide dehydrogenase (E3). The protein is 78 kDa dihydrolipoyllysine-residue acetyltransferase component of pyruvate dehydrogenase complex of Solanum tuberosum (Potato).